Reading from the N-terminus, the 308-residue chain is Eugenol synthase 1 (308 aa).

Residues threonine 13 to isoleucine 16, valine 35 to lysine 45, arginine 36, glutamine 86 to glutamine 88, serine 111 to phenylalanine 113, lysine 133, and asparagine 153 to phenylalanine 155 contribute to the NADP(+) site. Catalysis depends on lysine 133, which acts as the Proton donor/acceptor.

This sequence belongs to the NmrA-type oxidoreductase family. As to expression, in flowers, mostly expressed in limbs, and, to a lower extent, in tubes.

It catalyses the reaction eugenol + a carboxylate + NADP(+) = a coniferyl ester + NADPH. The enzyme catalyses eugenol + acetate + NADP(+) = (E)-coniferyl acetate + NADPH. It participates in aromatic compound metabolism; phenylpropanoid biosynthesis. Its function is as follows. Involved in the biosynthesis of the floral volatile eugenol. Catalyzes the synthesis of the phenylpropene eugenol from coniferyl acetate. Phenylpropenes are produced by plants as defense compounds with antimicrobial and antianimal properties, or as floral attractants of pollinators. The chain is Eugenol synthase 1 from Petunia hybrida (Petunia).